A 118-amino-acid polypeptide reads, in one-letter code: Aspartate 1-decarboxylase (118 aa).

Catalysis depends on Ser25, which acts as the Schiff-base intermediate with substrate; via pyruvic acid. The residue at position 25 (Ser25) is a Pyruvic acid (Ser). Thr57 provides a ligand contact to substrate. Catalysis depends on Tyr58, which acts as the Proton donor. 73–75 (GAA) contributes to the substrate binding site.

It belongs to the PanD family. As to quaternary structure, heterooctamer of four alpha and four beta subunits. Pyruvate serves as cofactor. Post-translationally, is synthesized initially as an inactive proenzyme, which is activated by self-cleavage at a specific serine bond to produce a beta-subunit with a hydroxyl group at its C-terminus and an alpha-subunit with a pyruvoyl group at its N-terminus.

The protein localises to the cytoplasm. It carries out the reaction L-aspartate + H(+) = beta-alanine + CO2. It functions in the pathway cofactor biosynthesis; (R)-pantothenate biosynthesis; beta-alanine from L-aspartate: step 1/1. Catalyzes the pyruvoyl-dependent decarboxylation of aspartate to produce beta-alanine. In Hyphomonas neptunium (strain ATCC 15444), this protein is Aspartate 1-decarboxylase.